A 154-amino-acid polypeptide reads, in one-letter code: Large ribosomal subunit protein uL15 (154 aa).

The disordered stretch occupies residues 17 to 44; it reads KRVGRGIGSGTGKTGGRGVKGQRSRSGV. The span at 21–35 shows a compositional bias: gly residues; it reads RGIGSGTGKTGGRGV.

The protein belongs to the universal ribosomal protein uL15 family. Part of the 50S ribosomal subunit.

Binds to the 23S rRNA. This is Large ribosomal subunit protein uL15 from Bartonella henselae (strain ATCC 49882 / DSM 28221 / CCUG 30454 / Houston 1) (Rochalimaea henselae).